Consider the following 339-residue polypeptide: Heat-inducible transcription repressor HrcA (339 aa).

This sequence belongs to the HrcA family.

Negative regulator of class I heat shock genes (grpE-dnaK-dnaJ and groELS operons). Prevents heat-shock induction of these operons. This chain is Heat-inducible transcription repressor HrcA, found in Clostridioides difficile (strain 630) (Peptoclostridium difficile).